Here is a 490-residue protein sequence, read N- to C-terminus: uncharacterized protein (490 aa).

A signal peptide spans 1–19 (MSITSVSLYVYLICAGGHA).

It belongs to the mimivirus L137 family.

This is an uncharacterized protein from Acanthamoeba polyphaga (Amoeba).